The chain runs to 291 residues: m-AAA protease-interacting protein 1, mitochondrial (291 aa).

Residues Met1–Tyr96 constitute a mitochondrion transit peptide.

As to quaternary structure, interacts with AFG3L2. Interacts with SPG7. Interacts with SMDT1/EMRE (via the N-terminal transit peptide); interaction is direct and takes place before maturation of SMDT1/EMRE.

Its subcellular location is the mitochondrion matrix. Promotes sorting of SMDT1/EMRE in mitochondria by ensuring its maturation. Interacts with the transit peptide region of SMDT1/EMRE precursor protein in the mitochondrial matrix, leading to protect it against protein degradation by YME1L1, thereby ensuring SMDT1/EMRE maturation by the mitochondrial processing peptidase (PMPCA and PMPCB). The polypeptide is m-AAA protease-interacting protein 1, mitochondrial (Rattus norvegicus (Rat)).